Here is a 186-residue protein sequence, read N- to C-terminus: Elongation factor P (186 aa).

Belongs to the elongation factor P family.

It is found in the cytoplasm. It functions in the pathway protein biosynthesis; polypeptide chain elongation. Functionally, involved in peptide bond synthesis. Stimulates efficient translation and peptide-bond synthesis on native or reconstituted 70S ribosomes in vitro. Probably functions indirectly by altering the affinity of the ribosome for aminoacyl-tRNA, thus increasing their reactivity as acceptors for peptidyl transferase. The polypeptide is Elongation factor P (Prochlorococcus marinus (strain MIT 9211)).